The primary structure comprises 331 residues: Protein RecA (331 aa).

Residue 61–68 (GPESSGKT) coordinates ATP.

Belongs to the RecA family.

Its subcellular location is the cytoplasm. Functionally, can catalyze the hydrolysis of ATP in the presence of single-stranded DNA, the ATP-dependent uptake of single-stranded DNA by duplex DNA, and the ATP-dependent hybridization of homologous single-stranded DNAs. It interacts with LexA causing its activation and leading to its autocatalytic cleavage. The polypeptide is Protein RecA (Mycoplasma mobile (strain ATCC 43663 / 163K / NCTC 11711) (Mesomycoplasma mobile)).